The sequence spans 160 residues: Nucleotide-binding protein VS_1405 (160 aa).

This sequence belongs to the YajQ family.

In terms of biological role, nucleotide-binding protein. The protein is Nucleotide-binding protein VS_1405 of Vibrio atlanticus (strain LGP32) (Vibrio splendidus (strain Mel32)).